The following is a 344-amino-acid chain: Aspartate-semialdehyde dehydrogenase (344 aa).

Residues 10 to 13 (TGQV) and 38 to 39 (RS) each bind NADP(+). Phosphate is bound at residue Arg101. Cys131 acts as the Acyl-thioester intermediate in catalysis. Substrate is bound at residue Gln158. Position 161–162 (161–162 (SG)) interacts with NADP(+). Lys228 is a phosphate binding site. Position 250 (Arg250) interacts with substrate. His257 acts as the Proton acceptor in catalysis. Residue Asn326 participates in NADP(+) binding.

Belongs to the aspartate-semialdehyde dehydrogenase family. As to quaternary structure, homodimer.

It carries out the reaction L-aspartate 4-semialdehyde + phosphate + NADP(+) = 4-phospho-L-aspartate + NADPH + H(+). Its pathway is amino-acid biosynthesis; L-lysine biosynthesis via DAP pathway; (S)-tetrahydrodipicolinate from L-aspartate: step 2/4. It participates in amino-acid biosynthesis; L-methionine biosynthesis via de novo pathway; L-homoserine from L-aspartate: step 2/3. It functions in the pathway amino-acid biosynthesis; L-threonine biosynthesis; L-threonine from L-aspartate: step 2/5. Catalyzes the NADPH-dependent formation of L-aspartate-semialdehyde (L-ASA) by the reductive dephosphorylation of L-aspartyl-4-phosphate. The sequence is that of Aspartate-semialdehyde dehydrogenase from Corynebacterium melassecola.